Here is a 151-residue protein sequence, read N- to C-terminus: Small ribosomal subunit protein uS13m (151 aa).

Belongs to the universal ribosomal protein uS13 family. As to quaternary structure, component of the mitochondrial small ribosomal subunit (mt-SSU). Mature yeast 74S mitochondrial ribosomes consist of a small (37S) and a large (54S) subunit. The 37S small subunit contains a 15S ribosomal RNA (15S mt-rRNA) and at least 32 different proteins. The 54S large subunit contains a 21S rRNA (21S mt-rRNA) and at least 45 different proteins.

The protein resides in the mitochondrion. Component of the mitochondrial ribosome (mitoribosome), a dedicated translation machinery responsible for the synthesis of mitochondrial genome-encoded proteins, including at least some of the essential transmembrane subunits of the mitochondrial respiratory chain. The mitoribosomes are attached to the mitochondrial inner membrane and translation products are cotranslationally integrated into the membrane. The polypeptide is Small ribosomal subunit protein uS13m (sws2) (Schizosaccharomyces pombe (strain 972 / ATCC 24843) (Fission yeast)).